A 503-amino-acid chain; its full sequence is 3-octaprenyl-4-hydroxybenzoate carboxy-lyase (503 aa).

Asparagine 176 is a Mn(2+) binding site. Prenylated FMN contacts are provided by residues 179–181, 193–195, and 198–199; these read IYR, RWL, and RG. A Mn(2+)-binding site is contributed by glutamate 242. Aspartate 303 serves as the catalytic Proton donor.

The protein belongs to the UbiD family. Homohexamer. Requires prenylated FMN as cofactor. The cofactor is Mn(2+).

Its subcellular location is the cell membrane. The enzyme catalyses a 4-hydroxy-3-(all-trans-polyprenyl)benzoate + H(+) = a 2-(all-trans-polyprenyl)phenol + CO2. It participates in cofactor biosynthesis; ubiquinone biosynthesis. Functionally, catalyzes the decarboxylation of 3-octaprenyl-4-hydroxy benzoate to 2-octaprenylphenol, an intermediate step in ubiquinone biosynthesis. The protein is 3-octaprenyl-4-hydroxybenzoate carboxy-lyase of Ralstonia pickettii (strain 12J).